The sequence spans 553 residues: MVPVEDLVYRYALLNAVKHRGRANPGAVMGAVMSNEPELRKMAPQVKEAVEAAVERVNSLSPEEQQQEMERLGLEITERKQKKRKGLRELAGVKGEVVLRFAPNPSGPLHIGHARAAILNHEYARKYDGRLILRIEDTDPRRVDPEAYDMIPADLEWLGVEWDETVIQSDRMETYYEYTEKLIERGGAYVCTCRPEEFRELKNRGEACHCRSLGFRENLQRWREMFEMKEGSAVVRVKTDLNHPNPAIRDWVSMRIVEAEHPRTGTRYRVYPMMNFSVAVDDHLLGVTHVLRGKDHLANREKQEYLYRHLGWEPPEFIHYGRLKMDDVALSTSGAREGILRGEYSGWDDPRLGTLRAIARRGIRPEAIRKLMVEIGVKIADSTMSWKKIYGLNRSILEEEARRYFFAADPVKLEVVGLPGPVRVERPLHPDHPEIGNRVLELRGEVYLPGDDLGEGPLRLIDAVNVIYSGGELRYHSEGIEEARELGASMIHWVPAESALEAEVIMPDASRVRGVIEADASELEVDDVVQLERFGFARLDSAGPGMVFYYAHK.

Positions Pro-103–His-113 match the 'HIGH' region motif.

This sequence belongs to the class-I aminoacyl-tRNA synthetase family. Glutamate--tRNA ligase type 2 subfamily.

The protein localises to the cytoplasm. It catalyses the reaction tRNA(Glu) + L-glutamate + ATP = L-glutamyl-tRNA(Glu) + AMP + diphosphate. Catalyzes the attachment of glutamate to tRNA(Glu) in a two-step reaction: glutamate is first activated by ATP to form Glu-AMP and then transferred to the acceptor end of tRNA(Glu). This chain is Glutamate--tRNA ligase, found in Methanothermobacter thermautotrophicus (strain ATCC 29096 / DSM 1053 / JCM 10044 / NBRC 100330 / Delta H) (Methanobacterium thermoautotrophicum).